Consider the following 710-residue polypeptide: Polyribonucleotide nucleotidyltransferase (710 aa).

Positions 489 and 495 each coordinate Mg(2+). Positions 556 to 615 (PKIDTIKIDVDKIKVVIGKGGETIDKIIAETGVKIDIDDEGNVSIYSSDQAAIDRTKEII) constitute a KH domain. The 69-residue stretch at 625 to 693 (GEVYHAKVIR…EKGRVDASMK (69 aa)) folds into the S1 motif domain.

It belongs to the polyribonucleotide nucleotidyltransferase family. It depends on Mg(2+) as a cofactor.

The protein resides in the cytoplasm. The enzyme catalyses RNA(n+1) + phosphate = RNA(n) + a ribonucleoside 5'-diphosphate. In terms of biological role, involved in mRNA degradation. Catalyzes the phosphorolysis of single-stranded polyribonucleotides processively in the 3'- to 5'-direction. The sequence is that of Polyribonucleotide nucleotidyltransferase from Streptococcus pyogenes serotype M3 (strain ATCC BAA-595 / MGAS315).